Reading from the N-terminus, the 255-residue chain is Pimeloyl-[acyl-carrier protein] methyl ester esterase (255 aa).

Substrate contacts are provided by residues tryptophan 18, 78–79, and 139–143; these read SL and FLALD. Serine 78 (nucleophile) is an active-site residue. Residues aspartate 203 and histidine 233 contribute to the active site. Histidine 233 provides a ligand contact to substrate.

It belongs to the AB hydrolase superfamily. Carboxylesterase BioH family. In terms of assembly, monomer.

It is found in the cytoplasm. The catalysed reaction is 6-carboxyhexanoyl-[ACP] methyl ester + H2O = 6-carboxyhexanoyl-[ACP] + methanol + H(+). Its pathway is cofactor biosynthesis; biotin biosynthesis. The physiological role of BioH is to remove the methyl group introduced by BioC when the pimeloyl moiety is complete. It allows to synthesize pimeloyl-ACP via the fatty acid synthetic pathway through the hydrolysis of the ester bonds of pimeloyl-ACP esters. This is Pimeloyl-[acyl-carrier protein] methyl ester esterase from Xylella fastidiosa (strain M23).